Reading from the N-terminus, the 107-residue chain is MSAIPLNRILPLGFLLIFSFISLSSCMEFVEDPNNQGGLNLQQRLGNQWAVGHLMGKKSLQDTDFEEMESFAKRNVENMKAESERELRHAQLVVRNILEQYLKNMQN.

The N-terminal stretch at 1–26 (MSAIPLNRILPLGFLLIFSFISLSSC) is a signal peptide. Positions 27–41 (MEFVEDPNNQGGLNL) are excised as a propeptide. At Q42 the chain carries Pyrrolidone carboxylic acid. M55 bears the Methionine amide mark. Positions 56–107 (GKKSLQDTDFEEMESFAKRNVENMKAESERELRHAQLVVRNILEQYLKNMQN) are excised as a propeptide.

As to expression, expressed by the skin glands.

The protein resides in the secreted. Functionally, stimulates smooth muscle contraction. Role in induction of hypothermia, stimulation of DNA replication and release of many gastrointestinal hormones. Possesses insulin-releasing activity. The chain is Bombesin from Bombina variegata (Yellow-bellied toad).